Reading from the N-terminus, the 379-residue chain is MPAVTYEHIKTCKQSGARLGIVHTPHGSFETPMFMPVGTKATVKTMSPEELRQIEAKIILGNTYHLWLQPGNDIIKHAGGLHKFMNWDGPILTDSGGFQVFSLSNLRKITEEGVEFRHHTNGSKLFLSPEKSMQIQNDLGSDIMMAFDECPPMPAEYDYVKKSIERTTRWAKRCLDAHQRPEDQALFGIIQGGEYEDLREQSAKDLVELDFPGYAIGGLSVGEPKPVMYKMVEHTEQFMPKDKPRYLMGVGSPDALIECSIRGMDMFDCVLPTRIARNGTCMTSQGRLVIKNAKFADDLRPLDENCDCYTCQNYSRAYIRHLIKAEETFGIRLTTIHNLHFLLKLMEDIRQAIREDRLLDFKEEFFEQYGLNVENPKNF.

Catalysis depends on aspartate 94, which acts as the Proton acceptor. Substrate-binding positions include 94–98 (DSGGF), aspartate 148, glutamine 191, and glycine 218. The RNA binding stretch occupies residues 249–255 (GVGSPDA). Aspartate 268 acts as the Nucleophile in catalysis. The tract at residues 273–277 (TRIAR) is RNA binding; important for wobble base 34 recognition. Zn(2+)-binding residues include cysteine 306, cysteine 308, cysteine 311, and histidine 337.

Belongs to the queuine tRNA-ribosyltransferase family. As to quaternary structure, homodimer. Within each dimer, one monomer is responsible for RNA recognition and catalysis, while the other monomer binds to the replacement base PreQ1. Requires Zn(2+) as cofactor.

The enzyme catalyses 7-aminomethyl-7-carbaguanine + guanosine(34) in tRNA = 7-aminomethyl-7-carbaguanosine(34) in tRNA + guanine. It participates in tRNA modification; tRNA-queuosine biosynthesis. Its function is as follows. Catalyzes the base-exchange of a guanine (G) residue with the queuine precursor 7-aminomethyl-7-deazaguanine (PreQ1) at position 34 (anticodon wobble position) in tRNAs with GU(N) anticodons (tRNA-Asp, -Asn, -His and -Tyr). Catalysis occurs through a double-displacement mechanism. The nucleophile active site attacks the C1' of nucleotide 34 to detach the guanine base from the RNA, forming a covalent enzyme-RNA intermediate. The proton acceptor active site deprotonates the incoming PreQ1, allowing a nucleophilic attack on the C1' of the ribose to form the product. After dissociation, two additional enzymatic reactions on the tRNA convert PreQ1 to queuine (Q), resulting in the hypermodified nucleoside queuosine (7-(((4,5-cis-dihydroxy-2-cyclopenten-1-yl)amino)methyl)-7-deazaguanosine). This chain is Queuine tRNA-ribosyltransferase, found in Staphylococcus aureus (strain Mu3 / ATCC 700698).